Reading from the N-terminus, the 289-residue chain is MLGWCEAIARNPHRIPNNTRTPEISGDLADASQTSTLNEKSPGRSASRSSNISKASSPTTGTAPRSQSRLSVCPSTQDICRICHCEGDEESPLITPCRCTGTLRFVHQSCLHQWIKSSDTRCCELCKYDFIMETKLKPLRKWEKLQMTTSERRKIFCSVTFHVIAITCVVWSLYVLIDRTAEEIKQGNDNGVLEWPFWTKLVVVAIGFTGGLVFMYVQCKVYVQLWRRLKAYNRVIFVQNCPDTAKKLEKNFSCNVNTDIKDAVVVPVPQTGANSLPSAEGGPPEVVSV.

The segment at 1-66 is responsible for low stability; sequence MLGWCEAIAR…SPTTGTAPRS (66 aa). Residues 13–69 are disordered; it reads HRIPNNTRTPEISGDLADASQTSTLNEKSPGRSASRSSNISKASSPTTGTAPRSQSR. Positions 43–58 are enriched in low complexity; sequence GRSASRSSNISKASSP. Residues 59-69 show a composition bias toward polar residues; it reads TTGTAPRSQSR. The segment at 72 to 133 adopts an RING-CH-type zinc-finger fold; it reads VCPSTQDICR…ELCKYDFIME (62 aa). Cys80, Cys83, Cys97, Cys99, His107, Cys110, Cys123, and Cys126 together coordinate Zn(2+). 2 helical membrane-spanning segments follow: residues 155 to 175 and 197 to 217; these read IFCS…SLYV and FWTK…FMYV. Residues 222 to 279 form a responsible for down-regulation of CD86 and MHC class II cell surface expression region; sequence YVQLWRRLKAYNRVIFVQNCPDTAKKLEKNFSCNVNTDIKDAVVVPVPQTGANSLPSA.

Interacts with CD83; this interaction antagonizes MARCHF1-mediated MHC II and CD86 down-regulation. Ubiquitinated via ubiquitin-conjugating enzyme E2 D1/UBE2D1 independently of lysines, leading to proteolytic degradation. In terms of processing, has a short half-life. Instability/short half-life permits rapid changes that allow efficient induction of antigen presentation once antigen presenting cells, APCs, receive maturation signals. Small changes in protein levels significantly alter the cell surface display of MHC class II proteins. Expressed in antigen presenting cells, APCs, located in lymph nodes and spleen. Also expressed in lung. Expression is high in follicular B-cells, moderate in dendritic cells and low in splenic T-cells.

It is found in the golgi apparatus. Its subcellular location is the trans-Golgi network membrane. It localises to the lysosome membrane. The protein localises to the cytoplasmic vesicle membrane. The protein resides in the late endosome membrane. It is found in the early endosome membrane. Its subcellular location is the cell membrane. The catalysed reaction is S-ubiquitinyl-[E2 ubiquitin-conjugating enzyme]-L-cysteine + [acceptor protein]-L-lysine = [E2 ubiquitin-conjugating enzyme]-L-cysteine + N(6)-ubiquitinyl-[acceptor protein]-L-lysine.. It participates in protein modification; protein ubiquitination. Functionally, E3 ubiquitin-protein ligase that mediates ubiquitination of TFRC, CD86, FAS and MHC class II proteins, such as HLA-DR alpha and beta, and promotes their subsequent endocytosis and sorting to lysosomes via multivesicular bodies. By constitutively ubiquitinating MHC class II proteins in immature dendritic cells, down-regulates their cell surface localization thus sequestering them in the intracellular endosomal system. Also regulates insulin sensitivity by controlling surface expression of the insulin receptor subunit beta/INSR by direct ubiquitination and degradation. Its function is as follows. (Microbial infection) Plays a role in iron metabolism by regulating the levels of the transferrin receptor TFRC during human cytomegalovirus infection, subsequently contributing to a proviral effect. This Homo sapiens (Human) protein is E3 ubiquitin-protein ligase MARCHF1.